Reading from the N-terminus, the 307-residue chain is Ribosomal RNA small subunit methyltransferase H (307 aa).

S-adenosyl-L-methionine contacts are provided by residues 33–35, Asp51, Phe82, Asp96, and Gln103; that span reads GGY.

This sequence belongs to the methyltransferase superfamily. RsmH family.

Its subcellular location is the cytoplasm. It catalyses the reaction cytidine(1402) in 16S rRNA + S-adenosyl-L-methionine = N(4)-methylcytidine(1402) in 16S rRNA + S-adenosyl-L-homocysteine + H(+). In terms of biological role, specifically methylates the N4 position of cytidine in position 1402 (C1402) of 16S rRNA. The chain is Ribosomal RNA small subunit methyltransferase H from Rickettsia africae (strain ESF-5).